A 177-amino-acid chain; its full sequence is Large ribosomal subunit protein uL6 (177 aa).

It belongs to the universal ribosomal protein uL6 family. Part of the 50S ribosomal subunit.

Functionally, this protein binds to the 23S rRNA, and is important in its secondary structure. It is located near the subunit interface in the base of the L7/L12 stalk, and near the tRNA binding site of the peptidyltransferase center. The protein is Large ribosomal subunit protein uL6 of Salmonella arizonae (strain ATCC BAA-731 / CDC346-86 / RSK2980).